Consider the following 113-residue polypeptide: TYRO protein tyrosine kinase-binding protein (113 aa).

A signal peptide spans 1–21; that stretch reads MGGLEPCSRLLLLPLLLAVSG. The Extracellular segment spans residues 22-40; it reads LRPVQAQAQSDCSCSTVSP. The helical transmembrane segment at 41–61 threads the bilayer; the sequence is GVLAGIVMGDLVLTVLIALAV. Residue Asp-50 participates in Ca(2+) binding. Residues 62–113 lie on the Cytoplasmic side of the membrane; that stretch reads YFLGRLVPRGRGAAEAATRKQRITETESPYQELQGQRSDVYSDLNTQRPYYK. The disordered stretch occupies residues 75–113; the sequence is AEAATRKQRITETESPYQELQGQRSDVYSDLNTQRPYYK. The 29-residue stretch at 80–108 folds into the ITAM domain; that stretch reads RKQRITETESPYQELQGQRSDVYSDLNTQ. Residues 87 to 113 show a composition bias toward polar residues; it reads TESPYQELQGQRSDVYSDLNTQRPYYK. Phosphotyrosine is present on residues Tyr-91 and Tyr-102.

This sequence belongs to the TYROBP family. Homodimer; disulfide-linked. Homotrimer; disulfide-linked. Homotetramer; disulfide-linked. Homotrimers and homotetramers form when low levels of partner receptors are available and are competitive with assembly with interacting receptors. They may represent alternative oligomerization states or may be intermediates in the receptor assembly process. Binding of a metal cation aids in homooligomerization through coordination of the metal ion by the subunits of the oligomer. Interacts with TREM1. Interacts with TREM2. Interacts with SIRPB1. Interacts with CLECSF5. Interacts with SIGLEC14. Interacts with CD300LB and CD300E. Interacts with CD300C2. Interacts (via ITAM domain) with SYK (via SH2 domains); activates SYK mediating neutrophil and macrophage integrin-mediated activation. Interacts with KLRC2, KIR2DS3 and KIR2DS5. Interacts with CD300H. Interacts with KIR2DS1. Interacts with KLRD1. Interacts with SIGLEC1. Post-translationally, following ligand binding by associated receptors, tyrosine phosphorylated in the ITAM domain which leads to activation of additional tyrosine kinases and subsequent cell activation. In terms of tissue distribution, expressed at low levels in the early development of the hematopoietic system and in the promonocytic stage and at high levels in mature monocytes. Expressed in hematological cells and tissues such as peripheral blood leukocytes and spleen. Also found in bone marrow, lymph nodes, placenta, lung and liver. Expressed at lower levels in different parts of the brain especially in the basal ganglia and corpus callosum.

It localises to the cell membrane. Functionally, adapter protein which non-covalently associates with activating receptors found on the surface of a variety of immune cells to mediate signaling and cell activation following ligand binding by the receptors. TYROBP is tyrosine-phosphorylated in the ITAM domain following ligand binding by the associated receptors which leads to activation of additional tyrosine kinases and subsequent cell activation. Also has an inhibitory role in some cells. Non-covalently associates with activating receptors of the CD300 family to mediate cell activation. Also mediates cell activation through association with activating receptors of the CD200R family. Required for neutrophil activation mediated by integrin. Required for the activation of myeloid cells mediated by the CLEC5A/MDL1 receptor. Associates with natural killer (NK) cell receptors such as KIR2DS2 and the KLRD1/KLRC2 heterodimer to mediate NK cell activation. Also enhances trafficking and cell surface expression of NK cell receptors KIR2DS1, KIR2DS2 and KIR2DS4 and ensures their stability at the cell surface. Associates with SIRPB1 to mediate activation of myeloid cells such as monocytes and dendritic cells. Associates with TREM1 to mediate activation of neutrophils and monocytes. Associates with TREM2 on monocyte-derived dendritic cells to mediate up-regulation of chemokine receptor CCR7 and dendritic cell maturation and survival. Association with TREM2 mediates cytokine-induced formation of multinucleated giant cells which are formed by the fusion of macrophages. Stabilizes the TREM2 C-terminal fragment (TREM2-CTF) produced by TREM2 ectodomain shedding which suppresses the release of pro-inflammatory cytokines. In microglia, required with TREM2 for phagocytosis of apoptotic neurons. Required with ITGAM/CD11B in microglia to control production of microglial superoxide ions which promote the neuronal apoptosis that occurs during brain development. Promotes pro-inflammatory responses in microglia following nerve injury which accelerates degeneration of injured neurons. Positively regulates the expression of the IRAK3/IRAK-M kinase and IL10 production by liver dendritic cells and inhibits their T cell allostimulatory ability. Negatively regulates B cell proliferation. Required for CSF1-mediated osteoclast cytoskeletal organization. Positively regulates multinucleation during osteoclast development. This chain is TYRO protein tyrosine kinase-binding protein, found in Homo sapiens (Human).